Consider the following 54-residue polypeptide: Light-harvesting protein B-870 beta chain (54 aa).

The Cytoplasmic segment spans residues 1–20 (EVKQESLSGITEGEAKEFHK). A bacteriochlorophyll contacts are provided by His19 and His37. Residues 21-43 (IFTSSILVFFGVAAFAHLLVWIW) form a helical membrane-spanning segment. The Periplasmic portion of the chain corresponds to 44 to 54 (RPWVPGPNGYS).

Belongs to the antenna complex beta subunit family. As to quaternary structure, the core complex is formed by different alpha and beta chains, binding bacteriochlorophyll molecules, and arranged most probably in tetrameric structures disposed around the reaction center. The non-pigmented gamma chains may constitute additional components.

The protein localises to the cell inner membrane. Antenna complexes are light-harvesting systems, which transfer the excitation energy to the reaction centers. The protein is Light-harvesting protein B-870 beta chain of Rhodospirillum rubrum.